A 289-amino-acid chain; its full sequence is 4-diphosphocytidyl-2-C-methyl-D-erythritol kinase (289 aa).

Lys11 is an active-site residue. Residue 95–105 participates in ATP binding; that stretch reads PMGGGIGGGSS. Asp137 is an active-site residue.

It belongs to the GHMP kinase family. IspE subfamily.

It catalyses the reaction 4-CDP-2-C-methyl-D-erythritol + ATP = 4-CDP-2-C-methyl-D-erythritol 2-phosphate + ADP + H(+). Its pathway is isoprenoid biosynthesis; isopentenyl diphosphate biosynthesis via DXP pathway; isopentenyl diphosphate from 1-deoxy-D-xylulose 5-phosphate: step 3/6. In terms of biological role, catalyzes the phosphorylation of the position 2 hydroxy group of 4-diphosphocytidyl-2C-methyl-D-erythritol. This Aeromonas hydrophila subsp. hydrophila (strain ATCC 7966 / DSM 30187 / BCRC 13018 / CCUG 14551 / JCM 1027 / KCTC 2358 / NCIMB 9240 / NCTC 8049) protein is 4-diphosphocytidyl-2-C-methyl-D-erythritol kinase.